Here is a 184-residue protein sequence, read N- to C-terminus: Photosystem I assembly protein Ycf4 (184 aa).

Transmembrane regions (helical) follow at residues 22 to 42 and 57 to 77; these read FCWA…GTSS and IVFF…LFIS.

The protein belongs to the Ycf4 family.

It is found in the plastid. It localises to the chloroplast thylakoid membrane. Functionally, seems to be required for the assembly of the photosystem I complex. This is Photosystem I assembly protein Ycf4 from Helianthus annuus (Common sunflower).